Here is a 558-residue protein sequence, read N- to C-terminus: Formate--tetrahydrofolate ligase (558 aa).

An ATP-binding site is contributed by 66–73 (TPAGEGKT).

Belongs to the formate--tetrahydrofolate ligase family.

It carries out the reaction (6S)-5,6,7,8-tetrahydrofolate + formate + ATP = (6R)-10-formyltetrahydrofolate + ADP + phosphate. The protein operates within one-carbon metabolism; tetrahydrofolate interconversion. The chain is Formate--tetrahydrofolate ligase from Neisseria meningitidis serogroup B (strain ATCC BAA-335 / MC58).